A 96-amino-acid polypeptide reads, in one-letter code: Co-chaperonin GroES 1 (96 aa).

This sequence belongs to the GroES chaperonin family. Heptamer of 7 subunits arranged in a ring. Interacts with the chaperonin GroEL.

The protein localises to the cytoplasm. Functionally, together with the chaperonin GroEL, plays an essential role in assisting protein folding. The GroEL-GroES system forms a nano-cage that allows encapsulation of the non-native substrate proteins and provides a physical environment optimized to promote and accelerate protein folding. GroES binds to the apical surface of the GroEL ring, thereby capping the opening of the GroEL channel. The protein is Co-chaperonin GroES 1 of Vibrio vulnificus (strain CMCP6).